A 295-amino-acid chain; its full sequence is Ribose-phosphate pyrophosphokinase (295 aa).

ATP is bound by residues 46–48 (DGE) and 101–102 (RQ). Mg(2+) is bound by residues His-132 and Asp-171. Lys-194 is a catalytic residue. Residues Arg-196 and Asp-220 each contribute to the D-ribose 5-phosphate site.

Belongs to the ribose-phosphate pyrophosphokinase family. Class III (archaeal) subfamily. It depends on Mg(2+) as a cofactor.

The protein resides in the cytoplasm. The catalysed reaction is D-ribose 5-phosphate + ATP = 5-phospho-alpha-D-ribose 1-diphosphate + AMP + H(+). It functions in the pathway metabolic intermediate biosynthesis; 5-phospho-alpha-D-ribose 1-diphosphate biosynthesis; 5-phospho-alpha-D-ribose 1-diphosphate from D-ribose 5-phosphate (route I): step 1/1. Functionally, involved in the biosynthesis of the central metabolite phospho-alpha-D-ribosyl-1-pyrophosphate (PRPP) via the transfer of pyrophosphoryl group from ATP to 1-hydroxyl of ribose-5-phosphate (Rib-5-P). In Methanosarcina mazei (strain ATCC BAA-159 / DSM 3647 / Goe1 / Go1 / JCM 11833 / OCM 88) (Methanosarcina frisia), this protein is Ribose-phosphate pyrophosphokinase.